The primary structure comprises 560 residues: Alpha-keto-acid decarboxylase (560 aa).

Glutamate 61 contributes to the thiamine diphosphate binding site. The segment at 396 to 478 (TSFYGMADHR…VVVNNDGYTV (83 aa)) is thiamine pyrophosphate binding. Mg(2+) contacts are provided by aspartate 446, asparagine 473, and glycine 475.

This sequence belongs to the TPP enzyme family. The cofactor is a metal cation. Requires thiamine diphosphate as cofactor.

In terms of biological role, decarboxylates branched-chain and aromatic alpha-keto acids to aldehydes. The polypeptide is Alpha-keto-acid decarboxylase (kdc) (Mycobacterium tuberculosis (strain CDC 1551 / Oshkosh)).